We begin with the raw amino-acid sequence, 335 residues long: 2-acylglycerol O-acyltransferase 2-B (335 aa).

A run of 2 helical transmembrane segments spans residues 24–44 (WAVS…LLLF) and 104–124 (YIMG…NFCT). N-linked (GlcNAc...) asparagine glycosylation occurs at Asn-206.

The protein belongs to the diacylglycerol acyltransferase family.

It is found in the endoplasmic reticulum membrane. It localises to the cytoplasm. Its subcellular location is the perinuclear region. The catalysed reaction is a 2-acylglycerol + an acyl-CoA = a 1,2-diacylglycerol + CoA. It carries out the reaction a 2-acylglycerol + an acyl-CoA = a 1,2-diacyl-sn-glycerol + CoA. It catalyses the reaction a 2-acylglycerol + an acyl-CoA = a 2,3-diacyl-sn-glycerol + CoA. The enzyme catalyses a 1-acylglycerol + an acyl-CoA = a 1,2-diacylglycerol + CoA. The catalysed reaction is a 1-acylglycerol + an acyl-CoA = a 1,3-diacylglycerol + CoA. It carries out the reaction 1-O-alkylglycerol + an acyl-CoA = 1-O-alkyl-3-acylglycerol + CoA. It catalyses the reaction an acyl-CoA + a 1,2-diacyl-sn-glycerol = a triacyl-sn-glycerol + CoA. It participates in glycerolipid metabolism; triacylglycerol biosynthesis. Functionally, catalyzes the formation of diacylglycerol from 2-monoacylglycerol and fatty acyl-CoA. In terms of biological role, involved in glycerolipid synthesis and lipid metabolism. Catalyzes the formation of diacylglycerol, the precursor of triacylglycerol, by transferring the acyl chain of a fatty acyl-CoA to a monoacylglycerol. Plays a central role in absorption of dietary fat in the small intestine by catalyzing the resynthesis of triacylglycerol in enterocytes. Has a preference toward monoacylglycerols containing unsaturated fatty acids in an order of C18:3 &gt; C18:2 &gt; C18:1 &gt; C18:0 at sn-2. Able to use 1-monoalkylglycerol (1-MAkG, 1-O-alkylglycerol) as an acyl acceptor for the synthesis of monoalkyl-monoacylglycerol (MAMAG, 1-O-alkyl-3-acylglycerol or 1-O-alkyl-2-acylglycerol) and subsequently, with lower efficiency, may add another acyl chain producing monoalkyl-diacylglycerol (MADAG, 1-O-alkyl-2,3-diacylglycerol). Possesses weak but significant activity with diacylglycerol as substrate, producing triacylglycerol (triacyl-sn-glycerol). This is 2-acylglycerol O-acyltransferase 2-B (mogat2-b) from Xenopus laevis (African clawed frog).